The primary structure comprises 119 residues: DNA-binding protein inhibitor ID-3 (119 aa).

The region spanning 28-80 (RGKGPAAEEPLSLLDDMNHCYSRLRELVPGVPRGTQLSQVEILQRVIDYILDL) is the bHLH domain.

In terms of assembly, homodimer, and heterodimer with other HLH proteins. Interacts with COPS5 and COPS7A. Interacts with IFI204. Interacts with GATA4 and NKX2-5. Interacts with ANKRD2; both proteins cooperate in myoblast differentiation. Interacts with CLOCK and BMAL1.

Its subcellular location is the nucleus. Transcriptional regulator (lacking a basic DNA binding domain) which negatively regulates the basic helix-loop-helix (bHLH) transcription factors by forming heterodimers and inhibiting their DNA binding and transcriptional activity. Implicated in regulating a variety of cellular processes, including cellular growth, senescence, differentiation, apoptosis, angiogenesis, and neoplastic transformation. Involved in myogenesis by inhibiting skeletal muscle and cardiac myocyte differentiation and promoting muscle precursor cells proliferation. Inhibits the binding of E2A-containing protein complexes to muscle creatine kinase E-box enhancer. Regulates the circadian clock by repressing the transcriptional activator activity of the CLOCK-BMAL1 heterodimer. In Canis lupus familiaris (Dog), this protein is DNA-binding protein inhibitor ID-3 (ID3).